A 674-amino-acid chain; its full sequence is Phosphopantothenoylcysteine decarboxylase subunit VHS3 (674 aa).

Disordered stretches follow at residues 1-164 (MTNK…SILS), 190-230 (LNSD…RPSV), 348-368 (QHNSIDTSFNSTNSNAGNITG), 384-426 (TSSN…SNVV), and 575-674 (VSAG…LQRS). Residues 15-81 (ASNTLSGAEQ…TSGAVVSNTP (67 aa)) are compositionally biased toward polar residues. Threonine 90 bears the Phosphothreonine mark. Residues 106-116 (EQTPPNQVARQ) show a composition bias toward polar residues. The segment covering 137-150 (NLKDINTKVPKDGE) has biased composition (basic and acidic residues). Over residues 152 to 164 (SASSFSTPTSILS) the composition is skewed to polar residues. The span at 198-212 (SPRKEHPHFYVEDPL) shows a compositional bias: basic and acidic residues. A compositionally biased stretch (low complexity) spans 214–230 (TPSVRSRSNSTSPRPSV). The segment covering 351 to 368 (SIDTSFNSTNSNAGNITG) has biased composition (polar residues). Over residues 384–395 (TSSNSAASQTNN) the composition is skewed to low complexity. The segment covering 403 to 426 (MASTTGFPSTLGGSRTYSNSSNVV) has biased composition (polar residues). Residues 580–591 (EEEEDEDNDEED) are compositionally biased toward acidic residues. Residues 592–602 (DNKKNDTGGKD) show a composition bias toward basic and acidic residues. Over residues 603 to 660 (EDNDDDDDDDDDDDDDDDDDDDDDDDDDDDDDDDDDDDDDDDDDDDDDEDDEDEDEDD) the composition is skewed to acidic residues. Over residues 661 to 674 (EGKKKEDKGGLQRS) the composition is skewed to basic and acidic residues.

The protein belongs to the HFCD (homooligomeric flavin containing Cys decarboxylase) superfamily. As to quaternary structure, interacts with the C-terminal domain of PPZ1. Component of the phosphopantothenoylcysteine decarboxylase (PPCDC) complex, a heterotrimer composed of CAB3, SIS2 and VHS3.

Its function is as follows. Component of the phosphopantothenoylcysteine decarboxylase (PPCDC) involved in the coenzyme A synthesis. Acts as an inhibitory subunit of protein phosphatase PPZ1, which is involved in many cellular processes such as G1-S transition or salt tolerance. In Saccharomyces cerevisiae (strain ATCC 204508 / S288c) (Baker's yeast), this protein is Phosphopantothenoylcysteine decarboxylase subunit VHS3 (VHS3).